The primary structure comprises 263 residues: 3-methyl-2-oxobutanoate hydroxymethyltransferase (263 aa).

The Mg(2+) site is built by D45 and D84. 3-methyl-2-oxobutanoate is bound by residues 45 to 46 (DS), D84, and K112. A Mg(2+)-binding site is contributed by E114. Residue E180 is the Proton acceptor of the active site.

It belongs to the PanB family. Homodecamer; pentamer of dimers. Mg(2+) serves as cofactor.

It is found in the cytoplasm. It carries out the reaction 3-methyl-2-oxobutanoate + (6R)-5,10-methylene-5,6,7,8-tetrahydrofolate + H2O = 2-dehydropantoate + (6S)-5,6,7,8-tetrahydrofolate. Its pathway is cofactor biosynthesis; (R)-pantothenate biosynthesis; (R)-pantoate from 3-methyl-2-oxobutanoate: step 1/2. Its function is as follows. Catalyzes the reversible reaction in which hydroxymethyl group from 5,10-methylenetetrahydrofolate is transferred onto alpha-ketoisovalerate to form ketopantoate. This Salmonella paratyphi C (strain RKS4594) protein is 3-methyl-2-oxobutanoate hydroxymethyltransferase.